A 363-amino-acid polypeptide reads, in one-letter code: 3-isopropylmalate dehydrogenase (363 aa).

Residue 78-91 (GPKWEHLPPDQQPE) coordinates NAD(+). Substrate-binding residues include R99, R109, R138, and D227. Mg(2+)-binding residues include D227, D251, and D255. Position 285-297 (285-297 (GSAPDIAGKNIAN)) interacts with NAD(+).

Belongs to the isocitrate and isopropylmalate dehydrogenases family. LeuB type 1 subfamily. In terms of assembly, homodimer. The cofactor is Mg(2+). Requires Mn(2+) as cofactor.

Its subcellular location is the cytoplasm. It carries out the reaction (2R,3S)-3-isopropylmalate + NAD(+) = 4-methyl-2-oxopentanoate + CO2 + NADH. It participates in amino-acid biosynthesis; L-leucine biosynthesis; L-leucine from 3-methyl-2-oxobutanoate: step 3/4. In terms of biological role, catalyzes the oxidation of 3-carboxy-2-hydroxy-4-methylpentanoate (3-isopropylmalate) to 3-carboxy-4-methyl-2-oxopentanoate. The product decarboxylates to 4-methyl-2 oxopentanoate. This is 3-isopropylmalate dehydrogenase from Escherichia coli O157:H7.